The following is a 534-amino-acid chain: Membrane-bound lytic murein transglycosylase F (534 aa).

Residues 1 to 24 (MQISQFNRLKRSALLFASVLLLSA) form the signal peptide. The tract at residues 25–285 (CQIESEPKSE…TLEEKYIGHI (261 aa)) is non-LT domain. The interval 287 to 534 (AFDYVDTRAF…AEQTPVPKAE (248 aa)) is LT domain. Residue E330 is part of the active site. The disordered stretch occupies residues 507-534 (VSGAVEVTPPPEENAPQEAEQTPVPKAE). Positions 520–534 (NAPQEAEQTPVPKAE) are enriched in low complexity.

The protein in the N-terminal section; belongs to the bacterial solute-binding protein 3 family. This sequence in the C-terminal section; belongs to the transglycosylase Slt family.

The protein resides in the cell outer membrane. The enzyme catalyses Exolytic cleavage of the (1-&gt;4)-beta-glycosidic linkage between N-acetylmuramic acid (MurNAc) and N-acetylglucosamine (GlcNAc) residues in peptidoglycan, from either the reducing or the non-reducing ends of the peptidoglycan chains, with concomitant formation of a 1,6-anhydrobond in the MurNAc residue.. Its function is as follows. Murein-degrading enzyme that degrades murein glycan strands and insoluble, high-molecular weight murein sacculi, with the concomitant formation of a 1,6-anhydromuramoyl product. Lytic transglycosylases (LTs) play an integral role in the metabolism of the peptidoglycan (PG) sacculus. Their lytic action creates space within the PG sacculus to allow for its expansion as well as for the insertion of various structures such as secretion systems and flagella. The sequence is that of Membrane-bound lytic murein transglycosylase F from Vibrio campbellii (strain ATCC BAA-1116).